Reading from the N-terminus, the 64-residue chain is Alpha-conotoxin GI (64 aa).

An N-terminal signal peptide occupies residues 1-21; that stretch reads MGMRMMFTVFLLVVLATTVVS. Positions 22-49 are excised as a propeptide; sequence FPSERASDGRDDTAKDEGSDMDKLVEKK. 2 disulfide bridges follow: C51–C56 and C52–C62. C62 is subject to Cysteine amide.

The protein belongs to the conotoxin A superfamily. Not hydroxylated; hydroxylation, on a synthetic hydroxylated GI, improves its folding but impairs its activity against target receptors. As to expression, expressed by the venom duct.

It localises to the secreted. In terms of biological role, alpha-conotoxins act on postsynaptic membranes, they bind to the nicotinic acetylcholine receptors (nAChR) and thus inhibit them. Reversibly inhibits mammalian muscle nAChR (IC(50)=339 nM on adult subtype (alpha-1-beta-1-gamma-delta/CHRNA1-CHRNB1-CHRNG-CHRND) and IC(50)=5.86-995 nM on fetal subtype (alpha-1-beta-1-delta-epsilon/CHRNA1-CHRNB1-CHRND-CHRNE)). The higher affinity site is the alpha/delta site on mouse muscle-derived BC3H-1 receptor, and the other site (alpha/gamma site) on nicotinic receptors from Torpedo californica electric organ. This is Alpha-conotoxin GI from Conus geographus (Geography cone).